The following is a 355-amino-acid chain: Isopentenyl-diphosphate delta-isomerase (355 aa).

9-10 (RK) provides a ligand contact to substrate. FMN contacts are provided by residues 67–69 (AIT), S97, and N125. Residue 97–99 (SQR) participates in substrate binding. A substrate-binding site is contributed by Q161. E162 is a binding site for Mg(2+). FMN contacts are provided by residues K197, T227, 276 to 278 (GIR), and 297 to 298 (AL).

Belongs to the IPP isomerase type 2 family. In terms of assembly, homooctamer. Dimer of tetramers. The cofactor is FMN. It depends on NADPH as a cofactor. Mg(2+) serves as cofactor.

It localises to the cytoplasm. It catalyses the reaction isopentenyl diphosphate = dimethylallyl diphosphate. In terms of biological role, involved in the biosynthesis of isoprenoids. Catalyzes the 1,3-allylic rearrangement of the homoallylic substrate isopentenyl (IPP) to its allylic isomer, dimethylallyl diphosphate (DMAPP). The sequence is that of Isopentenyl-diphosphate delta-isomerase from Methanococcus maripaludis (strain DSM 14266 / JCM 13030 / NBRC 101832 / S2 / LL).